We begin with the raw amino-acid sequence, 318 residues long: tRNA-modifying protein YgfZ (318 aa).

Trp28 and Trp182 together coordinate folate.

It belongs to the tRNA-modifying YgfZ family.

The protein localises to the cytoplasm. Folate-binding protein involved in regulating the level of ATP-DnaA and in the modification of some tRNAs. It is probably a key factor in regulatory networks that act via tRNA modification, such as initiation of chromosomal replication. This chain is tRNA-modifying protein YgfZ, found in Aliivibrio fischeri (strain MJ11) (Vibrio fischeri).